The sequence spans 365 residues: Deoxyribonuclease-2-alpha (365 aa).

Residues methionine 1–threonine 19 form the signal peptide. Cysteine 22 and cysteine 162 are oxidised to a cystine. Residues asparagine 215, asparagine 269, and asparagine 293 are each glycosylated (N-linked (GlcNAc...) asparagine). 2 cysteine pairs are disulfide-bonded: cysteine 270–cysteine 348 and cysteine 311–cysteine 330. Histidine 298 is an active-site residue.

The protein belongs to the DNase II family.

It localises to the lysosome. The enzyme catalyses Endonucleolytic cleavage to nucleoside 3'-phosphates and 3'-phosphooligonucleotide end-products.. Hydrolyzes DNA under acidic conditions with a preference for double-stranded DNA. Plays a major role in the clearance of nucleic acids generated through apoptosis, hence preventing autoinflammation. Necessary for proper fetal development and for definitive erythropoiesis in fetal liver and bone marrow, where it degrades nuclear DNA expelled from erythroid precursor cells. This Bos taurus (Bovine) protein is Deoxyribonuclease-2-alpha (DNASE2).